The following is a 263-amino-acid chain: MQKTHVSPSRWLLSPKMTAEAEVLLFSFHYAGGHAGIYREWQKKLPVQIGVCPVQLPGRSNRFMEPYYTDLSVMIRELAEALLPHLNRPFAFFGHSMGALVSFELARYLRNQYGIKPRHMFASGRHAPHLPDPGEAIHHLPDAEFLKGLRTLNGTPKELFENEENEEILQMLLPMLRADFTICEQYQYQEEEPLGCGLTAIGGWQDPDITVAHMEAWRKHTSASFQMHMLQGDHFFLHSEQEQLLAIIESTLQSYLVGYRGIG.

The active site involves Ser-96.

Belongs to the thioesterase family.

Its function is as follows. In the final step of gramicidin biosynthesis, reduces the pentadecapeptide-aldehyde intermediate, that is released from the terminal module of the non-ribosomal peptide synthetase LgrD, to the final product ethanolamine-containing gramicidin. The sequence is that of Linear gramicidin dehydrogenase LgrE (lgrE) from Brevibacillus parabrevis.